Here is a 426-residue protein sequence, read N- to C-terminus: Histidine--tRNA ligase (426 aa).

This sequence belongs to the class-II aminoacyl-tRNA synthetase family. In terms of assembly, homodimer.

The protein localises to the cytoplasm. The catalysed reaction is tRNA(His) + L-histidine + ATP = L-histidyl-tRNA(His) + AMP + diphosphate + H(+). The polypeptide is Histidine--tRNA ligase (Shewanella baltica (strain OS223)).